A 485-amino-acid polypeptide reads, in one-letter code: Kynureninase 1 (485 aa).

Pyridoxal 5'-phosphate contacts are provided by residues Leu-155, Thr-156, 183–186, Asp-267, His-270, and Tyr-292; that span reads FPSD. At Lys-293 the chain carries N6-(pyridoxal phosphate)lysine. Pyridoxal 5'-phosphate is bound by residues Trp-330 and Asn-358.

This sequence belongs to the kynureninase family. Homodimer. Requires pyridoxal 5'-phosphate as cofactor.

Its subcellular location is the cytoplasm. The enzyme catalyses L-kynurenine + H2O = anthranilate + L-alanine + H(+). The catalysed reaction is 3-hydroxy-L-kynurenine + H2O = 3-hydroxyanthranilate + L-alanine + H(+). It participates in amino-acid degradation; L-kynurenine degradation; L-alanine and anthranilate from L-kynurenine: step 1/1. The protein operates within cofactor biosynthesis; NAD(+) biosynthesis; quinolinate from L-kynurenine: step 2/3. Functionally, catalyzes the cleavage of L-kynurenine (L-Kyn) and L-3-hydroxykynurenine (L-3OHKyn) into anthranilic acid (AA) and 3-hydroxyanthranilic acid (3-OHAA), respectively. The protein is Kynureninase 1 (kyn-1) of Neurospora crassa (strain ATCC 24698 / 74-OR23-1A / CBS 708.71 / DSM 1257 / FGSC 987).